Consider the following 623-residue polypeptide: MAU2 chromatid cohesion factor homolog (623 aa).

TPR repeat units lie at residues Phe-96–Asn-129, Gly-451–Glu-484, and Ser-491–Ile-524.

It belongs to the SCC4/mau-2 family. In terms of assembly, interacts with Nipped-B to form the cohesin loading complex.

It localises to the nucleus. Its subcellular location is the nucleoplasm. Required for association of the cohesin complex with chromatin during interphase. Plays a role in sister chromatid cohesion and normal progression through prometaphase. The chain is MAU2 chromatid cohesion factor homolog from Drosophila grimshawi (Hawaiian fruit fly).